Here is a 275-residue protein sequence, read N- to C-terminus: MSQQLQQIIDTAWENRAELSPKAAPADVREAVAHAIEQLDKGLLRVAEKKDGDWVVNQWLKKAVLLSFRLEDNAPMPAGGYSQFYDKVPSKFANYTAEDFAAGGFRVVPPAIARRGSFIAKNVVLMPSYTNIGAYVDEGSMVDTWATVGSCAQIGKNVHLSGGVGIGGVLEPLQANPVIIEDNCFIGARSEVVEGVIVEENSVISMGVYLGQSTKIYDRETGEVTYGRIPAGSVVVAGNLPSKDGTHSLYCAVIVKKVDAKTRAKVGLNELLRGD.

The protein belongs to the transferase hexapeptide repeat family.

The protein localises to the cytoplasm. The catalysed reaction is (S)-2,3,4,5-tetrahydrodipicolinate + succinyl-CoA + H2O = (S)-2-succinylamino-6-oxoheptanedioate + CoA. It participates in amino-acid biosynthesis; L-lysine biosynthesis via DAP pathway; LL-2,6-diaminopimelate from (S)-tetrahydrodipicolinate (succinylase route): step 1/3. The polypeptide is 2,3,4,5-tetrahydropyridine-2,6-dicarboxylate N-succinyltransferase (Paraburkholderia phytofirmans (strain DSM 17436 / LMG 22146 / PsJN) (Burkholderia phytofirmans)).